A 525-amino-acid polypeptide reads, in one-letter code: Cytochrome P450 4V2 (525 aa).

The helical transmembrane segment at 13–33 (LLLWGAASAVSLAGASLVLSL) threads the bilayer. E329 and C467 together coordinate heme.

This sequence belongs to the cytochrome P450 family. It depends on heme as a cofactor.

It localises to the endoplasmic reticulum membrane. It carries out the reaction dodecanoate + reduced [NADPH--hemoprotein reductase] + O2 = 12-hydroxydodecanoate + oxidized [NADPH--hemoprotein reductase] + H2O + H(+). The catalysed reaction is tetradecanoate + reduced [NADPH--hemoprotein reductase] + O2 = 14-hydroxytetradecanoate + oxidized [NADPH--hemoprotein reductase] + H2O + H(+). It catalyses the reaction hexadecanoate + reduced [NADPH--hemoprotein reductase] + O2 = 16-hydroxyhexadecanoate + oxidized [NADPH--hemoprotein reductase] + H2O + H(+). The enzyme catalyses (5Z,8Z,11Z,14Z,17Z)-eicosapentaenoate + reduced [NADPH--hemoprotein reductase] + O2 = 20-hydroxy-(5Z,8Z,11Z,14Z,17Z)-eicosapentaenoate + oxidized [NADPH--hemoprotein reductase] + H2O + H(+). It carries out the reaction (4Z,7Z,10Z,13Z,16Z,19Z)-docosahexaenoate + reduced [NADPH--hemoprotein reductase] + O2 = 22-hydroxy-(4Z,7Z,10Z,13Z,16Z,19Z)-docosahexaenoate + oxidized [NADPH--hemoprotein reductase] + H2O + H(+). It participates in lipid metabolism; fatty acid metabolism. Its activity is regulated as follows. Inhibited by N-hydroxy-N'-(4-n-butyl-2-methylphenyl formamidine)(HET0016) with an IC(50) of 38 nM. Functionally, a cytochrome P450 monooxygenase involved in fatty acid metabolism in the eye. Catalyzes the omega-hydroxylation of polyunsaturated fatty acids (PUFAs) docosahexaenoate (DHA) and its precursor eicosapentaenoate (EPA), and may contribute to the homeostasis of these retinal PUFAs. Omega hydroxylates saturated fatty acids such as laurate, myristate and palmitate, the catalytic efficiency decreasing in the following order: myristate &gt; laurate &gt; palmitate (C14&gt;C12&gt;C16). Mechanistically, uses molecular oxygen inserting one oxygen atom into a substrate, and reducing the second into a water molecule, with two electrons provided by NADPH via cytochrome P450 reductase (CPR; NADPH-ferrihemoprotein reductase). This is Cytochrome P450 4V2 (CYP4V2) from Pongo abelii (Sumatran orangutan).